Consider the following 357-residue polypeptide: Alanine racemase (357 aa).

Lysine 34 serves as the catalytic Proton acceptor; specific for D-alanine. Lysine 34 carries the post-translational modification N6-(pyridoxal phosphate)lysine. Arginine 127 contacts substrate. The Proton acceptor; specific for L-alanine role is filled by tyrosine 252. Residue methionine 301 coordinates substrate.

This sequence belongs to the alanine racemase family. Pyridoxal 5'-phosphate is required as a cofactor.

It carries out the reaction L-alanine = D-alanine. It functions in the pathway amino-acid biosynthesis; D-alanine biosynthesis; D-alanine from L-alanine: step 1/1. In terms of biological role, catalyzes the interconversion of L-alanine and D-alanine. May also act on other amino acids. This is Alanine racemase (alr) from Dichelobacter nodosus (strain VCS1703A).